The chain runs to 371 residues: Bifunctional enzyme IspD/IspF (371 aa).

The tract at residues 1-210 (MSEMSLIMLA…LDLPTPSFEI (210 aa)) is 2-C-methyl-D-erythritol 4-phosphate cytidylyltransferase. Positions 211–371 (FTGNGFDVHE…NLKYFDWTRL (161 aa)) are 2-C-methyl-D-erythritol 2,4-cyclodiphosphate synthase. A divalent metal cation contacts are provided by Asp217 and His219. 4-CDP-2-C-methyl-D-erythritol 2-phosphate-binding positions include 217–219 (DVH) and 243–244 (HS). Residue His251 participates in a divalent metal cation binding. 4-CDP-2-C-methyl-D-erythritol 2-phosphate is bound by residues 265 to 267 (DIG), 270 to 274 (YPDTD), 309 to 315 (AQSPKLK), 341 to 344 (TTTE), Phe348, and Arg351.

In the N-terminal section; belongs to the IspD/TarI cytidylyltransferase family. IspD subfamily. This sequence in the C-terminal section; belongs to the IspF family. Requires a divalent metal cation as cofactor.

The enzyme catalyses 2-C-methyl-D-erythritol 4-phosphate + CTP + H(+) = 4-CDP-2-C-methyl-D-erythritol + diphosphate. The catalysed reaction is 4-CDP-2-C-methyl-D-erythritol 2-phosphate = 2-C-methyl-D-erythritol 2,4-cyclic diphosphate + CMP. It functions in the pathway isoprenoid biosynthesis; isopentenyl diphosphate biosynthesis via DXP pathway; isopentenyl diphosphate from 1-deoxy-D-xylulose 5-phosphate: step 2/6. Its pathway is isoprenoid biosynthesis; isopentenyl diphosphate biosynthesis via DXP pathway; isopentenyl diphosphate from 1-deoxy-D-xylulose 5-phosphate: step 4/6. Functionally, bifunctional enzyme that catalyzes the formation of 4-diphosphocytidyl-2-C-methyl-D-erythritol from CTP and 2-C-methyl-D-erythritol 4-phosphate (MEP) (IspD), and catalyzes the conversion of 4-diphosphocytidyl-2-C-methyl-D-erythritol 2-phosphate (CDP-ME2P) to 2-C-methyl-D-erythritol 2,4-cyclodiphosphate (ME-CPP) with a corresponding release of cytidine 5-monophosphate (CMP) (IspF). This is Bifunctional enzyme IspD/IspF from Campylobacter jejuni subsp. jejuni serotype O:2 (strain ATCC 700819 / NCTC 11168).